The sequence spans 376 residues: Queuine tRNA-ribosyltransferase (376 aa).

Catalysis depends on Asp93, which acts as the Proton acceptor. Residues 93 to 97 (DSGGF), Asp147, Gln191, and Gly218 contribute to the substrate site. Positions 249–255 (GVGKPED) are RNA binding. Asp268 functions as the Nucleophile in the catalytic mechanism. Residues 273–277 (TRNAR) are RNA binding; important for wobble base 34 recognition. Positions 306, 308, 311, and 337 each coordinate Zn(2+).

The protein belongs to the queuine tRNA-ribosyltransferase family. As to quaternary structure, homodimer. Within each dimer, one monomer is responsible for RNA recognition and catalysis, while the other monomer binds to the replacement base PreQ1. Zn(2+) is required as a cofactor.

It carries out the reaction 7-aminomethyl-7-carbaguanine + guanosine(34) in tRNA = 7-aminomethyl-7-carbaguanosine(34) in tRNA + guanine. The protein operates within tRNA modification; tRNA-queuosine biosynthesis. In terms of biological role, catalyzes the base-exchange of a guanine (G) residue with the queuine precursor 7-aminomethyl-7-deazaguanine (PreQ1) at position 34 (anticodon wobble position) in tRNAs with GU(N) anticodons (tRNA-Asp, -Asn, -His and -Tyr). Catalysis occurs through a double-displacement mechanism. The nucleophile active site attacks the C1' of nucleotide 34 to detach the guanine base from the RNA, forming a covalent enzyme-RNA intermediate. The proton acceptor active site deprotonates the incoming PreQ1, allowing a nucleophilic attack on the C1' of the ribose to form the product. After dissociation, two additional enzymatic reactions on the tRNA convert PreQ1 to queuine (Q), resulting in the hypermodified nucleoside queuosine (7-(((4,5-cis-dihydroxy-2-cyclopenten-1-yl)amino)methyl)-7-deazaguanosine). The chain is Queuine tRNA-ribosyltransferase from Histophilus somni (strain 129Pt) (Haemophilus somnus).